A 20-amino-acid polypeptide reads, in one-letter code: Phospholipase A2 homolog P-elapitoxin-Aa1a gamma chain (20 aa).

Belongs to the phospholipase A2 family. Group I subfamily. In terms of assembly, heterotrimer of alpha, beta and gamma chains, each related to PLA2. Glycosylated. In terms of tissue distribution, expressed by the venom gland.

Its subcellular location is the secreted. Functionally, heterotrimer: Snake venom phospholipase A2 (PLA2) that has presynaptic neurotoxicity. Inhibits nerve-evoked twitch contractions but not responses to cholinergic agonists acetylcholine and carbachol and to depolarizing agonist KCl. Causes a fade in tetanic contractions. Displays a triphasic mode of action with depression, enhancement and blockade of neurotransmission. Does not display myotoxic activity such as changes in baseline muscle tension or inhibition of directly stimulated muscle twitches. All subunits are necessary for maximum toxicity. In terms of biological role, monomer: the gamma chain has no significant enzymatic activity and is not toxic by itself. This is Phospholipase A2 homolog P-elapitoxin-Aa1a gamma chain from Acanthophis antarcticus (Common death adder).